Consider the following 522-residue polypeptide: MGSLDIKQESSPLMTNPLDSEEFRRQGYMVIDFLAEYYKNIQKFPVRSQVEPGYLRKRLPESAPYEPESIETILKDVHDDIVPGLTHWQSPNYYAYFPSSGSTAGLLGETLAAGFNVVGFNWISSPASTELESIVMDWLAEMLNLPKSFTFSGDGGGVMMGTTCEAILTTITAARDRILDRIGREHINKLVVYGSDQTHCSFFKSAKIAGISPNNFRQVKTSRVNAFSMRPDALRAAIQADVDAGLVPFFLCTTVGTTSTAAVDPVALLCEVAKDYGMWVHIDAAYAGNACICPEFRHMINGVENADSFSFNAHKWFLTTLDCCCLWVKDPSSLVRCLSTNPEYLKNKATDTQQVVDYKDWQITLSRRFRSLKMWLVLRSYGVDYLRNFLRSHVDMAAYFEQLVRMDGRFEVVVPRSFALVCFRLSASAVIQRLYDSCHRHGHGQKFLEEETLNDVNAELLESVNSAGQIYMTHSLVDGVYMLRFAVGATLTQTHHVTYAWKQVQDHASAVLARRINSICNC.

Tandem repeats lie at residues 75–132 and 135–186. The interval 75–186 is 2 X approximate tandem repeats; it reads KDVHDDIVPG…RILDRIGREH (112 aa). Positions 163, 164, 258, and 312 each coordinate pyridoxal 5'-phosphate. Lys-315 is subject to N6-(pyridoxal phosphate)lysine.

Belongs to the group II decarboxylase family. The cofactor is pyridoxal 5'-phosphate. As to expression, strongly expressed in all tissues, particularly in thick roots.

The catalysed reaction is L-tyrosine + H(+) = tyramine + CO2. The enzyme catalyses L-dopa + H(+) = dopamine + CO2. The protein operates within aromatic compound metabolism. It functions in the pathway alkaloid biosynthesis. Functionally, aromatic amino acid decarboxylase participating in the biosynthesis of natural products derived from phenylethylamine, including mescaline, a natural hallucinogen potentially used in psychotherapeutic treatments. Catalyzes the decarboxylation of L-tyrosine and L-DOPA. The chain is L-tyrosine/L-DOPA decarboxylase 2 from Lophophora williamsii (Peyote).